The following is a 357-amino-acid chain: Fructose-bisphosphate aldolase (357 aa).

Residues Arg49 and Lys140 each coordinate substrate. Glu183 serves as the catalytic Proton acceptor. Residue Lys225 is the Schiff-base intermediate with dihydroxyacetone-P of the active site.

Belongs to the class I fructose-bisphosphate aldolase family.

It catalyses the reaction beta-D-fructose 1,6-bisphosphate = D-glyceraldehyde 3-phosphate + dihydroxyacetone phosphate. It participates in carbohydrate degradation; glycolysis; D-glyceraldehyde 3-phosphate and glycerone phosphate from D-glucose: step 4/4. The sequence is that of Fructose-bisphosphate aldolase (fba) from Dictyostelium discoideum (Social amoeba).